The chain runs to 237 residues: Orotidine 5'-phosphate decarboxylase (237 aa).

Substrate-binding positions include Asp11, Lys34, 61 to 70, Thr124, Arg186, Gln195, Gly215, and Arg216; that span reads DLKLHDIPNT. Lys63 functions as the Proton donor in the catalytic mechanism.

The protein belongs to the OMP decarboxylase family. Type 1 subfamily. In terms of assembly, homodimer.

The catalysed reaction is orotidine 5'-phosphate + H(+) = UMP + CO2. The protein operates within pyrimidine metabolism; UMP biosynthesis via de novo pathway; UMP from orotate: step 2/2. In terms of biological role, catalyzes the decarboxylation of orotidine 5'-monophosphate (OMP) to uridine 5'-monophosphate (UMP). The protein is Orotidine 5'-phosphate decarboxylase of Lactococcus lactis subsp. cremoris (strain MG1363).